The following is a 1067-amino-acid chain: Eukaryotic translation initiation factor 3 subunit A (1067 aa).

The stretch at 92–121 (LKKFIELAEKKVTEAQAKADEIQSSLESAA) forms a coiled coil. The 185-residue stretch at 339–523 (MTKAASFVLL…GVLTFDTDIF (185 aa)) folds into the PCI domain. Residues 608–899 (RVLIEKKKEA…QKQREEEAEA (292 aa)) adopt a coiled-coil conformation. 4 stretches are compositionally biased toward basic and acidic residues: residues 617-632 (AATD…EETR), 642-665 (EAEK…DEQD), 795-901 (EVSE…EARR), and 916-926 (AEPERPAERTA). 2 disordered regions span residues 617–665 (AATD…DEQD) and 795–1067 (EVSE…QQQQ). Low complexity-rich tracts occupy residues 965 to 976 (AAPAAAPAPAAE) and 1025 to 1046 (SSSS…AASS).

The protein belongs to the eIF-3 subunit A family. Component of the eukaryotic translation initiation factor 3 (eIF-3) complex.

The protein resides in the cytoplasm. Its function is as follows. RNA-binding component of the eukaryotic translation initiation factor 3 (eIF-3) complex, which is involved in protein synthesis of a specialized repertoire of mRNAs and, together with other initiation factors, stimulates binding of mRNA and methionyl-tRNAi to the 40S ribosome. The eIF-3 complex specifically targets and initiates translation of a subset of mRNAs involved in cell proliferation. The sequence is that of Eukaryotic translation initiation factor 3 subunit A (tif32) from Neosartorya fischeri (strain ATCC 1020 / DSM 3700 / CBS 544.65 / FGSC A1164 / JCM 1740 / NRRL 181 / WB 181) (Aspergillus fischerianus).